We begin with the raw amino-acid sequence, 525 residues long: GMP synthase [glutamine-hydrolyzing] (525 aa).

A Glutamine amidotransferase type-1 domain is found at 9–207; the sequence is RILILDFGSQ…VRDICQCEAL (199 aa). The Nucleophile role is filled by Cys-86. Residues His-181 and Glu-183 contribute to the active site. Residues 208 to 400 enclose the GMPS ATP-PPase domain; the sequence is WTPAKIIDDA…LGLPYDMLYR (193 aa). 235-241 contacts ATP; it reads SGGVDSS.

In terms of assembly, homodimer.

The catalysed reaction is XMP + L-glutamine + ATP + H2O = GMP + L-glutamate + AMP + diphosphate + 2 H(+). It participates in purine metabolism; GMP biosynthesis; GMP from XMP (L-Gln route): step 1/1. Catalyzes the synthesis of GMP from XMP. This is GMP synthase [glutamine-hydrolyzing] from Shigella boydii serotype 4 (strain Sb227).